The following is an 818-amino-acid chain: MGDILAHESELLGLVKEYLDFAEFEDTLKTFSKECKIKGKPLCKTVGGSFRDSKSLTIQKDLVAAFDNGDQKVFFDLWEEHISSSIRDGDSFAQKLEFYLHIHFAIYLLKYSVGRPDKEELDEKISYFKTYLETKGAALSQTTEFLPFYALPFVPNPMVHPSFKELFQDSWTPELKLKLIKFLALISKASNTPKLLTIYKENGQSNKEILQQLHQQLVEAERRSVTYLKRYNKIQADYHNLIGVTAELVDSLEATVSGKMITPEYLQSVCVRLFSNQMRQSLAHSVDFTRPGTASTMLRASLAPVKLKDVPLLPSLDYEKLKKDLILGSDRLKAFLLQALRWRLTTSHPGEQRETVLQAYISNDLLDCYSHNQRSVLQLLHSTSDVVRQYMARLINAFASLAEGRLYLAQNTKVLQMLEGRLKEEDKDIITRENVLGALQKFSLRRPLQTAMIQDGLIFWLVDVLKDPDCLSDYTLEYSVALLMNLCLRSTGKNMCAKVAGLVLKVLSDLLGHENHEIQPYVNGALYSILSVPSIREEARAMGMEDILRCFIKEGNAEMIRQIEFIIKQLNSEELPDGVLESDDDEDEDDEEDHDIMEADLDKDELIQPQLGELSGEKLLTTEYLGIMTNTGKTRRKGLANVQWSGDEPLQRPVTPGGHRNGYPVVEDQHTPPQTAQHARNGHPQALPAAHEAVYREGKPSTPESCVSSSSAIIAKPGEWLPRGRQEEPRPAPTGTPRQPREAPQDPGNGVTTRECASAFTCKPRAPCTPEMLDWNPPKAKASVLAPLFSSCGPQQASRPGSTASSTRGLPSSQSHRK.

The region spanning 7–39 (HESELLGLVKEYLDFAEFEDTLKTFSKECKIKG) is the LisH domain. Residues 204 to 230 (QSNKEILQQLHQQLVEAERRSVTYLKR) adopt a coiled-coil conformation. A Phosphoserine modification is found at Ser-582. 2 disordered regions span residues 642 to 755 (VQWS…TTRE) and 790 to 818 (SSCGPQQASRPGSTASSTRGLPSSQSHRK). The span at 701-711 (STPESCVSSSS) shows a compositional bias: low complexity. Positions 792 to 818 (CGPQQASRPGSTASSTRGLPSSQSHRK) are enriched in polar residues.

In terms of assembly, interacts with TOGARAM1, CCDC66, CEP104, CSPP1 and CEP290. Interacts with NDUFAF2. Strongly expressed in most melanomas and melanocytes. Weakly expressed in the testis.

It localises to the cytoplasm. The protein localises to the cytoskeleton. Its subcellular location is the cilium basal body. The protein resides in the cell projection. It is found in the cilium. It localises to the microtubule organizing center. The protein localises to the centrosome. Its subcellular location is the centriole. In terms of biological role, involved in ciliogenesis. It is required for appropriate acetylation and polyglutamylation of ciliary microtubules, and regulation of cilium length. Acts as a positive regulator of hedgehog (Hh)signaling. May participate in the trafficking and/or retention of GLI2 and GLI3 proteins at the ciliary tip. The polypeptide is LisH domain-containing protein ARMC9 (Homo sapiens (Human)).